The sequence spans 257 residues: Steroid 5-alpha-reductase DET2 (257 aa).

A run of 6 helical transmembrane segments spans residues 11 to 31 (FIVF…QFFT), 47 to 67 (ISPP…TIIV), 78 to 97 (LAFL…TIIY), 110 to 130 (FPLN…YIQS), 151 to 171 (IGLV…GVLL), and 200 to 220 (IMEW…AFFV).

It belongs to the steroid 5-alpha reductase family. In terms of tissue distribution, mostly expressed in leaves and hypocotyls and, to a lower extent, in stems, cotyledons, roots, seeds and callus.

The protein localises to the membrane. The catalysed reaction is a 3-oxo-5alpha-steroid + NADP(+) = a 3-oxo-Delta(4)-steroid + NADPH + H(+). Its pathway is plant hormone biosynthesis; brassinosteroid biosynthesis. With respect to regulation, repressed by steroid (4-MA, VG106, PD91, PD17, Finasteride) and non-steroid (AS601811, AFA27, AFA76, AFA131, AFA192) inhibitors; steroid inhibitors are generally more efficient. Involved in a reduction step in the biosynthesis of the plant steroid, brassinolide (BL). Can use progesterone, testosterone, androstenedione and campestenone as substrate. The protein is Steroid 5-alpha-reductase DET2 of Solanum lycopersicum (Tomato).